A 93-amino-acid chain; its full sequence is Large ribosomal subunit protein uL23c (93 aa).

Belongs to the universal ribosomal protein uL23 family. Part of the 50S ribosomal subunit.

The protein resides in the plastid. It localises to the chloroplast. Functionally, binds to 23S rRNA. In Fragaria ananassa (Strawberry), this protein is Large ribosomal subunit protein uL23c (rpl23).